An 871-amino-acid chain; its full sequence is Espin (871 aa).

ANK repeat units follow at residues 1–31 (MALE…GPSL), 35–66 (LDAL…AVSR), 69–99 (NGAT…RVQE), 103–132 (SGAT…ANSA), 137–167 (TGAL…GVNA), 171–201 (NGAT…DPHL), 205–235 (DGMT…SFSE), 239–268 (DGAT…EISQ), and 271–300 (WGGT…GLDV). Residues Ser338 and Ser342 each carry the phosphoserine modification. 4 disordered regions span residues 349–400 (QLDS…RGIP), 416–469 (PEKS…VGLH), 493–750 (KVEL…APGV), and 819–850 (EREQ…TLGY). The span at 352 to 365 (SGMSSPNTTMSVQP) shows a compositional bias: polar residues. Over residues 377–395 (FSNYDSCSSSHSSSKGQRS) the composition is skewed to low complexity. Residues 428-465 (PSPPPPPPPPPPSFPPPPPPTGTQPPPPPPGYPAPNPP) are compositionally biased toward pro residues. Ser517, Ser524, and Ser556 each carry phosphoserine. The span at 522-548 (QDSELLHRQELLRHSTGLRRQDSDRKQ) shows a compositional bias: basic and acidic residues. Positions 606-629 (LPPPPPPPPLPEALSSPPPAPPLP) are enriched in pro residues. Composition is skewed to polar residues over residues 659-670 (KSFNMMSPTGDN) and 685-707 (PTPQ…SQPE). Ser665 is modified (phosphoserine). The WH2 domain maps to 669–686 (DNSELLAEIKAGKSLKPT). Phosphoserine occurs at positions 704, 708, and 714. Residues 772 to 848 (KRQVMVRKLQ…KEQSEKLRTL (77 aa)) are a coiled coil.

Monomer. Binds F-actin in a Ca(2+)-resistant fashion. Interacts (via N-terminus) with BAIAP2 (via SH3-domain). Interacts with PFN2. Interacts with MYO3A (via C-terminus). Interacts with MYO3B (via C-terminus). As to expression, expressed at high concentration in the microvillar parallel actin bundle (PAB) of hair cells stereocilia in the cochlea and vestibular system. Detected also at high levels of a number of other sensory cell types, including taste receptor cells, solitary chemoreceptor cells, vomeronasal sensory neurons and Merkel cells. Isoforms 2, 3, 4 and 5 are expressed in Purkinje cells dendritic spines. Expressed in utricle hair bundles (at protein level).

The protein resides in the cytoplasm. The protein localises to the cytoskeleton. Its subcellular location is the cell projection. It is found in the stereocilium. It localises to the microvillus. The protein resides in the cell junction. The protein localises to the dendritic spine. In terms of biological role, multifunctional actin-bundling protein. Plays a major role in regulating the organization, dimension, dynamics and signaling capacities of the actin filament-rich microvilli in the mechanosensory and chemosensory cells. Required for the assembly and stabilization of the stereociliary parallel actin bundles. Plays a crucial role in the formation and maintenance of inner ear hair cell stereocilia. Involved in the elongation of actin in stereocilia. In extrastriolar hair cells, required for targeting MYO3B to stereocilia tips, and for regulation of stereocilia diameter and staircase formation. This chain is Espin (Espn), found in Mus musculus (Mouse).